Here is a 772-residue protein sequence, read N- to C-terminus: Probable adenosine deaminase (772 aa).

His22 and His24 together coordinate Zn(2+). Substrate contacts are provided by His24, Asp26, and Gly180. Zn(2+) is bound at residue His207. Glu210 functions as the Proton donor in the catalytic mechanism. Asp288 serves as a coordination point for Zn(2+).

The protein belongs to the metallo-dependent hydrolases superfamily. Adenosine and AMP deaminases family. The cofactor is Zn(2+).

The catalysed reaction is adenosine + H2O + H(+) = inosine + NH4(+). Its function is as follows. Catalyzes the hydrolytic deamination of adenosine. Plays an important role in purine metabolism and in adenosine homeostasis, and may thereby contribute to cellular signaling events. In Dictyostelium discoideum (Social amoeba), this protein is Probable adenosine deaminase (ada).